A 145-amino-acid polypeptide reads, in one-letter code: Superoxide dismutase [Mn/Fe] (145 aa).

Fe(3+) is bound by residues H10 and H64. 2 residues coordinate Mn(2+): H10 and H64.

This sequence belongs to the iron/manganese superoxide dismutase family. The cofactor is Mn(2+). Fe(3+) serves as cofactor.

The catalysed reaction is 2 superoxide + 2 H(+) = H2O2 + O2. Destroys superoxide anion radicals which are normally produced within the cells and which are toxic to biological systems. Catalyzes the dismutation of superoxide anion radicals into O2 and H2O2 by successive reduction and oxidation of the transition metal ion at the active site. This Streptococcus iniae (Streptococcus shiloi) protein is Superoxide dismutase [Mn/Fe] (sodA).